A 206-amino-acid polypeptide reads, in one-letter code: Peroxynitrite isomerase (206 aa).

The GXWXGXG motif lies at 21–27; it reads GTWEGNG. Heme b is bound at residue His190.

It belongs to the nitrobindin family. Homodimer. Heme b serves as cofactor.

The enzyme catalyses peroxynitrite = nitrate. The protein operates within nitrogen metabolism. Functionally, heme-binding protein able to scavenge peroxynitrite and to protect free L-tyrosine against peroxynitrite-mediated nitration, by acting as a peroxynitrite isomerase that converts peroxynitrite to nitrate. Therefore, this protein likely plays a role in peroxynitrite sensing and in the detoxification of reactive nitrogen and oxygen species (RNS and ROS, respectively). Is able to bind nitric oxide (NO) in vitro, but may act as a sensor of peroxynitrite levels in vivo. This Kocuria rhizophila (strain ATCC 9341 / DSM 348 / NBRC 103217 / DC2201) protein is Peroxynitrite isomerase.